The sequence spans 273 residues: Tryptophan synthase alpha chain (273 aa).

Residues Glu56 and Asp67 each act as proton acceptor in the active site.

It belongs to the TrpA family. As to quaternary structure, tetramer of two alpha and two beta chains.

The catalysed reaction is (1S,2R)-1-C-(indol-3-yl)glycerol 3-phosphate + L-serine = D-glyceraldehyde 3-phosphate + L-tryptophan + H2O. It functions in the pathway amino-acid biosynthesis; L-tryptophan biosynthesis; L-tryptophan from chorismate: step 5/5. Functionally, the alpha subunit is responsible for the aldol cleavage of indoleglycerol phosphate to indole and glyceraldehyde 3-phosphate. This Shewanella baltica (strain OS155 / ATCC BAA-1091) protein is Tryptophan synthase alpha chain.